The chain runs to 842 residues: Cullin-8 (842 aa).

Residues 1–50 are required for interaction with MMS1; that stretch reads MINESVSKREGFHESISRETSASNALGLYNKFNDERNPRYRTMIAELHEF. The span at 755–765 shows a compositional bias: polar residues; sequence LQSSNTGGERT. The disordered stretch occupies residues 755 to 775; sequence LQSSNTGGERTSSAHHEGSNS. Lysine 791 participates in a covalent cross-link: Glycyl lysine isopeptide (Lys-Gly) (interchain with G-Cter in NEDD8).

The protein belongs to the cullin family. In terms of assembly, component of multiple cullin-RING ligases (CRLs) composed of 4 subunits: the RING protein HRT1, the cullin RTT101, a linker protein MMS1, and one of many alternative substrate receptors belonging to a protein family described as DCAF (DDB1- and CUL4-associated factor). Component of a RTT101(MMS1-MMS22) complex with the substrate receptor MMS22. This complex further interacts with RTT107 and CTF4 to form RTT101-MMS1-MMS22-RTT107 and RTT101-MMS1-MMS22-CTF4 complexes respectively. Component of a RTT101(MSS1-CRT10) complex with the substrate receptor CRT10. Component of a RTT101(MSS1-ESC2) complex with the potential substrate receptor ESC2. Component of a RTT101(MSS1-ORC5) complex with the potential substrate receptor ORC5. Interacts (via C-ter) with HRT1; required for ubiquitin-ligase activity. Interacts (via N-ter) with MMS1. In terms of processing, neddylated. HRT1-binding is necessary for RUB1/NEDD8 modification of RTT101. The modification enhances ubiquitin-ligase activity.

It localises to the cytoplasm. Its subcellular location is the nucleus. It participates in protein modification; protein ubiquitination. Functionally, core component of multiple cullin-RING-based E3 ubiquitin-protein ligase complexes (CRLs), which mediate the ubiquitination of target proteins. As a scaffold protein may contribute to catalysis through positioning of the substrate and the ubiquitin-conjugating enzyme. The CRL associates with CDC34 as the E2 ubiquitin-conjugating enzyme. The functional specificity of the CRL depends on the type of the associated substrate receptor protein. RTT101(MMS1-MMS22) promotes fork progression through damaged DNA or natural pause sites by stabilizing replication proteins like the replication fork-pausing complex (FPC) and leading-strand polymerase at stalled replication forks. RTT101(MMS1-MMS22) ubiquitinates the acetylated histones H3K56ac-H4 at lysine residues H3K121, H3K122 and H3K125. Ubiquitination is required for efficient histone deposition during replication-coupled nucleosome assembly, probably by facilitating the transfer of H3-H4 from ASF1 to other chaperones involved in histone deposition. RTT101(MMS1-CRT10) may regulate nucleotide synthesis through transcriptional regulation of ribonucleotide reductase. RTT101(MMS1) is also involved in the non-functional rRNA decay (NRD) of 25S rRNA through the selective, ubiquitination-dependent degradation of nonfunctional ribosomal particles. Ubiquitinates the FACT (facilitates chromatin transcription) complex subunit SPT16 in an MMS1-independent manner. Involved in regulation of Ty1 transposition and protects the genome from Ty1 integration upstream of tRNA genes. The protein is Cullin-8 (RTT101) of Saccharomyces cerevisiae (strain ATCC 204508 / S288c) (Baker's yeast).